Consider the following 2357-residue polypeptide: Protein transport protein Sec16A (2357 aa).

Disordered stretches follow at residues 1 to 25 and 57 to 303; these read MQPP…RSVF and FSRQ…STFR. Low complexity-rich tracts occupy residues 64–76 and 210–227; these read STPL…SSPP and QMPG…PSGQ. Polar residues predominate over residues 285 to 303; that stretch reads HLQSGSHLANNSDPESTFR. Phosphoserine is present on residues S296, S314, and S331. Disordered regions lie at residues 335–359, 508–540, 553–603, 758–828, 924–987, 1006–1038, and 1059–1151; these read NPLA…GSGC, APDA…ARPQ, KPED…TGIF, VQPP…NPPV, LLVQ…SSHQ, VNVY…PNLD, and QELV…APGP. A compositionally biased stretch (low complexity) spans 520–536; that stretch reads SVSSSYSSRSHGRLSGS. Phosphoserine occurs at positions 559, 569, 587, 589, and 592. At T593 the chain carries Phosphothreonine. S595 bears the Phosphoserine mark. 2 stretches are compositionally biased toward polar residues: residues 766 to 778 and 803 to 825; these read SGQQ…SAAP and LQSQ…SLQN. A compositionally biased stretch (polar residues) spans 1006-1028; the sequence is VNVYNPSHSDSLASQQSVASHPR. Residues 1019 to 1890 form a required for localization to endoplasmic reticulum exit sites region; the sequence is SQQSVASHPR…QQVERQIKEG (872 aa). The residue at position 1069 (S1069) is a Phosphoserine. Residues 1080-1101 are compositionally biased toward polar residues; sequence ELSNPESLPAQGQAQNSAQSPA. Residues 1101–1400 are interaction with MIA3; sequence ASLVLVDAGQ…EAPLPPGSFH (300 aa). Positions 1102–1405 are required for endoplasmic reticulum localization; the sequence is SLVLVDAGQQ…PGSFHGDFAY (304 aa). Low complexity predominate over residues 1118 to 1131; the sequence is QSSSVSLVSSGSGQ. Residues 1138 to 1151 show a composition bias toward pro residues; it reads QPWPQPVPALAPGP. Residues S1207, S1229, and S1305 each carry the phosphoserine modification. Positions 1215–1248 are disordered; the sequence is YPEPERPSSRASHSSERPPPRQGYPEGYYSSKSG. A compositionally biased stretch (basic and acidic residues) spans 1216 to 1233; the sequence is PEPERPSSRASHSSERPP. A compositionally biased stretch (basic and acidic residues) spans 1307-1322; sequence FGDRPEKRDNNWRYDP. Residues 1307–1378 form a disordered region; it reads FGDRPEKRDN…SLSSHSHQSQ (72 aa). At T1325 the chain carries Phosphothreonine. Residues S1327, S1347, S1350, S1356, S1359, S1362, S1369, S1573, and S1601 each carry the phosphoserine modification. A compositionally biased stretch (basic and acidic residues) spans 1333–1354; it reads DPHRDPYGEEVDRRSVHSEHSA. Residues 1356–1375 are compositionally biased toward low complexity; it reads SLHSAHSLASRRSSLSSHSH. The segment at 1434 to 1890 is central conserved domain (CCD); mediates interaction with RNF183, LRRK2 and SEC13; the sequence is QVSSRPTSPE…QQVERQIKEG (457 aa). T1907 carries the phosphothreonine modification. A phosphoserine mark is found at S1939, S1964, S2022, and S2042. 3 disordered regions span residues 2049–2110, 2141–2181, and 2226–2328; these read KFAN…SWFF, VNLN…PVNM, and NLFV…MPFY. The residue at position 2054 (T2054) is a Phosphothreonine. S2056, S2073, and S2083 each carry phosphoserine. Over residues 2087 to 2106 the composition is skewed to basic and acidic residues; that stretch reads ETKRPGQAAKKETKEPKKGE. The tract at residues 2106 to 2357 is required for interaction with SEC23A; the sequence is ESWFFRWLPG…IGQRKHLVLN (252 aa). A phosphoserine mark is found at S2271 and S2291. Low complexity-rich tracts occupy residues 2289 to 2302 and 2310 to 2324; these read ELSR…LSRE and APGD…PSGA.

This sequence belongs to the SEC16 family. SEC16A and SEC16B are each present in multiple copies in a heteromeric complex. Interacts with SEC23A. Interacts with RNF183 and RNF152. Interacts with LRRK2 (via ROC domain). Interacts with SEC13. Interacts with RAB10. Interacts with MIA3. Interacts with GORASP2 in response to ER stress. Ubiquitous. Expressed at higher levels in the pancreas.

It is found in the endoplasmic reticulum membrane. It localises to the golgi apparatus membrane. The protein localises to the cytoplasm. The protein resides in the perinuclear region. Its subcellular location is the cytosol. It is found in the microsome membrane. Functionally, acts as a molecular scaffold that plays a key role in the organization of the endoplasmic reticulum exit sites (ERES), also known as transitional endoplasmic reticulum (tER). SAR1A-GTP-dependent assembly of SEC16A on the ER membrane forms an organized scaffold defining an ERES. Required for secretory cargo traffic from the endoplasmic reticulum to the Golgi apparatus. Mediates the recruitment of MIA3/TANGO to ERES. Regulates both conventional (ER/Golgi-dependent) and GORASP2-mediated unconventional (ER/Golgi-independent) trafficking of CFTR to cell membrane. Positively regulates the protein stability of E3 ubiquitin-protein ligases RNF152 and RNF183 and the ER localization of RNF183. Acts as a RAB10 effector in the regulation of insulin-induced SLC2A4/GLUT4 glucose transporter-enriched vesicles delivery to the cell membrane in adipocytes. This chain is Protein transport protein Sec16A (SEC16A), found in Homo sapiens (Human).